We begin with the raw amino-acid sequence, 238 residues long: Probable succinyl-CoA:3-ketoacid coenzyme A transferase subunit A (238 aa).

24–30 (GGFGLCG) contributes to the CoA binding site.

The protein belongs to the 3-oxoacid CoA-transferase subunit A family. As to quaternary structure, heterodimer of a subunit A and a subunit B.

The enzyme catalyses a 3-oxo acid + succinyl-CoA = a 3-oxoacyl-CoA + succinate. The protein is Probable succinyl-CoA:3-ketoacid coenzyme A transferase subunit A (scoA) of Bacillus subtilis (strain 168).